We begin with the raw amino-acid sequence, 270 residues long: Protein ABHD14A (270 aa).

Residues 9 to 29 (LVVLGLVLLATVLLYLLLPSM) traverse the membrane as a helical; Signal-anchor for type II membrane protein segment. Residue Asn-61 is glycosylated (N-linked (GlcNAc...) asparagine). Active-site charge relay system residues include Ser-170 and Asp-221. A glycan (N-linked (GlcNAc...) asparagine) is linked at Asn-237. His-248 (charge relay system) is an active-site residue.

This sequence belongs to the AB hydrolase superfamily. ABHD14 family.

It is found in the cytoplasm. It localises to the membrane. In terms of biological role, possible role in granule neuron development. In Danio rerio (Zebrafish), this protein is Protein ABHD14A.